The primary structure comprises 56 residues: Large ribosomal subunit protein uL30 (56 aa).

This sequence belongs to the universal ribosomal protein uL30 family. As to quaternary structure, part of the 50S ribosomal subunit.

In Nitratidesulfovibrio vulgaris (strain DSM 19637 / Miyazaki F) (Desulfovibrio vulgaris), this protein is Large ribosomal subunit protein uL30.